A 427-amino-acid polypeptide reads, in one-letter code: UDP-N-acetylglucosamine 1-carboxyvinyltransferase 1 (427 aa).

23-24 (KN) serves as a coordination point for phosphoenolpyruvate. Arg-96 provides a ligand contact to UDP-N-acetyl-alpha-D-glucosamine. Cys-120 functions as the Proton donor in the catalytic mechanism. Position 120 is a 2-(S-cysteinyl)pyruvic acid O-phosphothioketal (Cys-120). UDP-N-acetyl-alpha-D-glucosamine is bound by residues 125 to 129 (RPIDL), Asp-309, and Val-331.

It belongs to the EPSP synthase family. MurA subfamily.

The protein resides in the cytoplasm. It carries out the reaction phosphoenolpyruvate + UDP-N-acetyl-alpha-D-glucosamine = UDP-N-acetyl-3-O-(1-carboxyvinyl)-alpha-D-glucosamine + phosphate. It participates in cell wall biogenesis; peptidoglycan biosynthesis. Cell wall formation. Adds enolpyruvyl to UDP-N-acetylglucosamine. This is UDP-N-acetylglucosamine 1-carboxyvinyltransferase 1 from Streptococcus pneumoniae (strain ATCC BAA-255 / R6).